The sequence spans 88 residues: Apolipoprotein C-I (88 aa).

Positions 1–26 (MRLFLSLPVWVAVLAMVLEGPAPAQA) are cleaved as a signal peptide.

It belongs to the apolipoprotein C1 family.

It is found in the secreted. Its function is as follows. Inhibitor of lipoprotein binding to the low density lipoprotein (LDL) receptor, LDL receptor-related protein, and very low density lipoprotein (VLDL) receptor. Associates with high density lipoproteins (HDL) and the triacylglycerol-rich lipoproteins in the plasma and makes up about 10% of the protein of the VLDL and 2% of that of HDL. Appears to interfere directly with fatty acid uptake and is also the major plasma inhibitor of cholesteryl ester transfer protein (CETP). Binds free fatty acids and reduces their intracellular esterification. Modulates the interaction of APOE with beta-migrating VLDL and inhibits binding of beta-VLDL to the LDL receptor-related protein. The chain is Apolipoprotein C-I (APOC1) from Ursus maritimus (Polar bear).